Here is a 235-residue protein sequence, read N- to C-terminus: Regulator of G-protein signaling 18 (235 aa).

Serine 49 is modified (phosphoserine). The RGS domain maps to 86-202 (SFDKLLSHRD…LKSDIYLDLM (117 aa)). A phosphoserine mark is found at serine 216 and serine 218.

Expressed in peripheral leukocytes, bone marrow, platelet, spleen and fetal liver.

It is found in the cytoplasm. In terms of biological role, inhibits signal transduction by increasing the GTPase activity of G protein alpha subunits thereby driving them into their inactive GDP-bound form. Binds to G(i) alpha-1, G(i) alpha-2, G(i) alpha-3 and G(q) alpha. This is Regulator of G-protein signaling 18 (RGS18) from Homo sapiens (Human).